Here is a 120-residue protein sequence, read N- to C-terminus: Aspartate 1-decarboxylase (120 aa).

Catalysis depends on serine 25, which acts as the Schiff-base intermediate with substrate; via pyruvic acid. Serine 25 is modified (pyruvic acid (Ser)). Threonine 57 provides a ligand contact to substrate. Tyrosine 58 acts as the Proton donor in catalysis. Residue glycine 73–alanine 75 coordinates substrate.

The protein belongs to the PanD family. In terms of assembly, heterooctamer of four alpha and four beta subunits. Requires pyruvate as cofactor. In terms of processing, is synthesized initially as an inactive proenzyme, which is activated by self-cleavage at a specific serine bond to produce a beta-subunit with a hydroxyl group at its C-terminus and an alpha-subunit with a pyruvoyl group at its N-terminus.

It is found in the cytoplasm. The enzyme catalyses L-aspartate + H(+) = beta-alanine + CO2. It participates in cofactor biosynthesis; (R)-pantothenate biosynthesis; beta-alanine from L-aspartate: step 1/1. In terms of biological role, catalyzes the pyruvoyl-dependent decarboxylation of aspartate to produce beta-alanine. The chain is Aspartate 1-decarboxylase from Cupriavidus necator (strain ATCC 17699 / DSM 428 / KCTC 22496 / NCIMB 10442 / H16 / Stanier 337) (Ralstonia eutropha).